The primary structure comprises 1072 residues: MDAASGILPDYAELFCRSNFSFLHGASSAEELVERAAKQGYRGIAITDECSLAGAPRMHVAAKAVGLPLVVGAYFGVTPDDAAPGHDPGPGAFGLVLLAQNREGYGNLSELISWRRMNAPKGTYRLTPRMLAAPPRALAHLRGVPDCFAILVPTYPARADVLDAQLAWFDALFGERARLGLVQLQRALDGAHREQVRAAGERRGMHIVALGDVTMHIRSCKPLQDTMTAIRLGMPIAECGHALAPNGEQHLRTRQRIAQLFPADALAQTCRMLDACHFSLDDLRYEYPHEIVPAGHTPTSYLAQETWAGARRRYPDGVPDTVRQRIEFELALIADLKYEPYFLTVYDIVKYARSKDILCQGRGSAANSVVCYCLGVTEVNPQQSTLLFERFLSRERGEPPDIDVDFEHQRREEVIQYLYEKYGHDRAALAAAVSTYRPRGALRETGKALGVDPMLVERVAKEHRWFDGSRDLLARFASVGLDPEVPLIRTWAEIAARLLNFPRHLSQHSGGFVVSRGKLTRLVPVENAAMEGRRVIQWDKDDLEALGLMKVDVLALGMLSALHRAFDMITAWRGPPLPDGRPFRLEHIPQDDEATYDMICRADTVGVFQIESRAQMSMLPRLRPRGYYDLVVQVSIVRPGPIQGGAVHPYLERRRIAAGEAHGEITYPSEALERVLERTLGIPIFQEQVMQIAIVAAGFTPGEADALRRAMAAWKRKGDLGKYHERIVAGMLERGYSREFAEQIFEQIKGFGEYGFPESHAASFAKLAYASSWLKRHEPAIFLAALLNSQPMGFYPPAQLVQDAKRHGVTVLPIDATKSGWEASLEAQPGAAPPDGRPAVRLGLSLVRGLGEEAARRIGAARAAGPFASVDELARRACLERRDLEALAAANAFATLAGNRRDALWQAVAAAPERGLLAAAPIDEAVRPALGAPTEADDVFADYRTIGLTLNRHPVALLRPALDARRLSSAAALRDRRNGRLARACGLVTARQMPGTAKGVLFVTLEDETGCVNVIVRPELLERQRRETLDSQLLAVSGVWQCESDVRHLVAQYLEDLTPLIAGLRTESREFH.

It belongs to the DNA polymerase type-C family. DnaE2 subfamily.

It is found in the cytoplasm. The enzyme catalyses DNA(n) + a 2'-deoxyribonucleoside 5'-triphosphate = DNA(n+1) + diphosphate. Its function is as follows. DNA polymerase involved in damage-induced mutagenesis and translesion synthesis (TLS). It is not the major replicative DNA polymerase. In Burkholderia pseudomallei (strain K96243), this protein is Error-prone DNA polymerase.